The chain runs to 374 residues: S-adenosylmethionine:tRNA ribosyltransferase-isomerase (374 aa).

The protein belongs to the QueA family. In terms of assembly, monomer.

Its subcellular location is the cytoplasm. The enzyme catalyses 7-aminomethyl-7-carbaguanosine(34) in tRNA + S-adenosyl-L-methionine = epoxyqueuosine(34) in tRNA + adenine + L-methionine + 2 H(+). Its pathway is tRNA modification; tRNA-queuosine biosynthesis. Functionally, transfers and isomerizes the ribose moiety from AdoMet to the 7-aminomethyl group of 7-deazaguanine (preQ1-tRNA) to give epoxyqueuosine (oQ-tRNA). The polypeptide is S-adenosylmethionine:tRNA ribosyltransferase-isomerase (Sorangium cellulosum (strain So ce56) (Polyangium cellulosum (strain So ce56))).